The following is a 3169-amino-acid chain: FRAS1-related extracellular matrix protein 2 (3169 aa).

The disordered stretch occupies residues 1–24 (MHSAGTPGLSSRRTGNSTSFQPGP). Residues 1–46 (MHSAGTPGLSSRRTGNSTSFQPGPPPPPRLLLLLLLLLSLVSRVPA) form the signal peptide. The segment covering 8-21 (GLSSRRTGNSTSFQ) has biased composition (polar residues). Residues 47–3113 (QPAAFGRALL…SPSSAVSLVT (3067 aa)) lie on the Extracellular side of the membrane. 12 CSPG repeats span residues 319–413 (KPSF…LELE), 438–537 (APVV…LRMV), 560–675 (PPVL…FRVQ), 700–807 (PPEL…FQVE), 828–919 (QPPE…LEVS), 945–1037 (HPTG…LSLS), 1066–1168 (APEI…FRCS), 1189–1282 (EQPE…IKLT), 1303–1399 (TPRM…FDVT), 1420–1512 (VFPD…FQVT), 1532–1621 (KKPV…FTVT), and 1655–1752 (VPQI…FAVE). Residue N358 is glycosylated (N-linked (GlcNAc...) asparagine). N1244 and N1369 each carry an N-linked (GlcNAc...) asparagine glycan. N-linked (GlcNAc...) asparagine glycans are attached at residues N1584 and N1741. Calx-beta domains follow at residues 1759-1858 (LTYQ…VVLS), 1871-1982 (ATVE…VLLS), 1997-2103 (QVTI…LVLR), 2118-2220 (VSIN…LVLG), and 2238-2342 (TLIR…VHLK). Residues 3036–3057 (SLVSQGKPQSTTKSRKKREIRS) are disordered. The span at 3037 to 3047 (LVSQGKPQSTT) shows a compositional bias: polar residues. The chain crosses the membrane as a helical span at residues 3114-3134 (VVGGTTVGLLTICLTVIAVLM). The Cytoplasmic segment spans residues 3135 to 3169 (CRGKESFRGKDAPKGSSSSEPMVPPQSHHNDSSEV). The disordered stretch occupies residues 3141 to 3169 (FRGKDAPKGSSSSEPMVPPQSHHNDSSEV).

Belongs to the FRAS1 family. Interacts with FREM1.

The protein localises to the cell membrane. Extracellular matrix protein required for maintenance of the integrity of the skin epithelium and for maintenance of renal epithelia. Required for epidermal adhesion. Involved in the development of eyelids and the anterior segment of the eyeballs. This is FRAS1-related extracellular matrix protein 2 (FREM2) from Homo sapiens (Human).